The primary structure comprises 329 residues: Zygote arrest protein 1 (329 aa).

Disordered stretches follow at residues 106–132 (LRRR…RTQA) and 146–218 (FREE…DDLK). Acidic residues predominate over residues 149–162 (EGEEEEDTDLEVTE). Over residues 166–177 (SAEKLESAEKNV) the composition is skewed to basic and acidic residues. The 3CxxC-type zinc-finger motif lies at 231 to 314 (KYGFYHCKDC…RQDLCGRCKG (84 aa)).

Belongs to the ZAR1 family. In terms of tissue distribution, specifically expressed in ovaries but absent in testes.

It is found in the cytoplasm. The protein localises to the cytoplasmic ribonucleoprotein granule. MRNA-binding protein required for maternal mRNA storage, translation and degradation during oocyte maturation. Probably promotes formation of some phase-separated membraneless compartment that stores maternal mRNAs in oocytes: acts by undergoing liquid-liquid phase separation upon binding to maternal mRNAs. Binds to the 3'-UTR of zona pellucida mRNAs, inhibiting their translation. This chain is Zygote arrest protein 1, found in Danio rerio (Zebrafish).